The sequence spans 1292 residues: HMG domain-containing protein 3 (1292 aa).

Residues Thr-42–Ala-110 constitute a DNA-binding region (HMG box). Disordered regions lie at residues Ser-363 to Leu-391, Val-448 to Arg-505, and Lys-562 to Ser-588. Residues Arg-370–Leu-391 are compositionally biased toward polar residues. The segment covering Pro-467–Pro-478 has biased composition (low complexity). Residues Lys-562–Ser-572 show a composition bias toward polar residues.

Its subcellular location is the nucleus. The polypeptide is HMG domain-containing protein 3 (Homo sapiens (Human)).